We begin with the raw amino-acid sequence, 908 residues long: Zinc finger and BTB domain-containing protein 41 (908 aa).

The interval 38 to 59 (TQAPERPTPEAAQRCQELPPSP) is disordered. The BTB domain maps to 89 to 153 (CDLLIIVEGK…LYTSEFFVYK (65 aa)). The C2H2-type 1 zinc-finger motif lies at 208-231 (HQCKFCSRHFCYKKSLENHLAKTH). Residues 252 to 261 (RRSKRNRKCP) are compositionally biased toward basic residues. Positions 252-344 (RRSKRNRKCP…EAGDSAGSIH (93 aa)) are disordered. The span at 267-276 (TSDDEQESGD) shows a compositional bias: acidic residues. Residues 279 to 296 (DNLHQESSEKERSDRNDS) are compositionally biased toward basic and acidic residues. Positions 297 to 336 (EDPGSEYNAEDEELEEEVSDEDSDTEQSDKDNDAEEEPEA) are enriched in acidic residues. 13 C2H2-type zinc fingers span residues 360–382 (LQCPKCDKTFDRIGKYESHTRVH), 388–410 (FECDICHQRYSTKSNLTVHRKKH), 421–444 (HKCPYCNKLHASKKTLAKHVKRFH), 462–484 (WKCDICKKSFTRRPHLEEHMILH), 490–513 (FKCTYCEEHFKSRFARLKHQEKFH), 517–540 (FPCDICGRQFNDTGNLKRHIECTH), 546–568 (WTCFICGKSVRERTTLKEHLRIH), 574–596 (HLCSICGQSFRHGSSYRLHLRVH), 602–624 (YECDECGKTFIRHDHLTKHKKIH), 630–653 (HQCEECGKCFGRRDHLTVHYKSVH), 667–689 (HQCDVCKKIFKGKSSLEMHFRTH), 695–717 (YKCQICNQSFRIKKTLTKHLVIH), and 723–746 (FNCQHCNATFKRKDKLKYHIDHVH).

The protein resides in the nucleus. May be involved in transcriptional regulation. This Mus musculus (Mouse) protein is Zinc finger and BTB domain-containing protein 41 (Zbtb41).